The following is a 603-amino-acid chain: Aquaporin-2 (603 aa).

The chain crosses the membrane as a helical span at residues Ser40 to Asn70. 2 stretches are compositionally biased toward basic and acidic residues: residues Asn135–Ile149 and Glu156–Lys190. The interval Asn135 to Asp200 is disordered. Residues Asn191–Asp200 are compositionally biased toward polar residues. A run of 5 helical transmembrane segments spans residues His282–Leu299, Phe321–Tyr346, Ile360–Lys393, Asn442–Thr471, and Ile509–Leu542.

Belongs to the MIP/aquaporin (TC 1.A.8) family.

The protein resides in the endomembrane system. The enzyme catalyses H2O(in) = H2O(out). The catalysed reaction is glycerol(in) = glycerol(out). Functionally, required for sporozoite development in the mosquito vector. The polypeptide is Aquaporin-2 (Plasmodium falciparum (isolate NF54)).